We begin with the raw amino-acid sequence, 431 residues long: Serine hydroxymethyltransferase 2 (431 aa).

(6S)-5,6,7,8-tetrahydrofolate is bound by residues L131 and 135-137 (GHL). N6-(pyridoxal phosphate)lysine is present on K240.

It belongs to the SHMT family. As to quaternary structure, homodimer. Pyridoxal 5'-phosphate is required as a cofactor.

The protein localises to the cytoplasm. It carries out the reaction (6R)-5,10-methylene-5,6,7,8-tetrahydrofolate + glycine + H2O = (6S)-5,6,7,8-tetrahydrofolate + L-serine. It participates in one-carbon metabolism; tetrahydrofolate interconversion. The protein operates within amino-acid biosynthesis; glycine biosynthesis; glycine from L-serine: step 1/1. Functionally, catalyzes the reversible interconversion of serine and glycine with tetrahydrofolate (THF) serving as the one-carbon carrier. This reaction serves as the major source of one-carbon groups required for the biosynthesis of purines, thymidylate, methionine, and other important biomolecules. Also exhibits THF-independent aldolase activity toward beta-hydroxyamino acids, producing glycine and aldehydes, via a retro-aldol mechanism. The protein is Serine hydroxymethyltransferase 2 of Vibrio parahaemolyticus serotype O3:K6 (strain RIMD 2210633).